Consider the following 639-residue polypeptide: MDISGFLKENKESLKDLKEDDINEILEDYEIDNINDPKQKIRFFKQVENTRKRLKIEEKNRMLEEDINRMYEEEKNRMLEEEKKEFLIKVEEEKKEFLTKVEEEKQKLKTEVEDLKSIILTSSTKNGDLKGTTSYSELFKIKNSLKLIEENCEFKDWNIPSGIELKKHVINLDDCNQESTMQSKLDEYFKDFNKKRKLIITNGTKIKINSIISNRYCDYFINQKGFPFEPYWMHMVGDIKKGSISSDTNLDQVLKYIDIIVEKSNHHVLNRPMFGFLMNKTKIKFVKYDIENNKYYITIDYDLRIGFQYLSNIMIYLEQFIRNIPNSLQTILKNHTNDSVEFYYGATSSVFIVNKEFVYKWFNYPYFFQTEVKYLTFIDGIEGTPSIKQQNQTENWIQISPRGQLIKNLEGKPIDISFYTKVFCRNTQKHTSREVIHRDIRLSNLLMDSGGDPLLVDFGFANFTENEEFYQGTMNTASNRIYNILINNRTNHAFSVVESDDLESLVKVYIMENEQAVKRTIKSIPNSEIGLFRTMWEFFNTECFPQYSTLFQQAQNINYEELKNEFIKIDKIKNTTTTSNNNQNHTNIHKNTIANTTSYTNTLETSTTNPNTNTTTSDTNTSTTSTTNTNTTTSNTITA.

Positions 7-122 (LKENKESLKD…EDLKSIILTS (116 aa)) form a coiled coil. Positions 233–588 (MHMVGDIKKG…SNNNQNHTNI (356 aa)) constitute a Protein kinase domain. Residues 239 to 247 (IKKGSISSD) and K284 contribute to the ATP site. D439 acts as the Proton acceptor in catalysis. The interval 601 to 639 (NTLETSTTNPNTNTTTSDTNTSTTSTTNTNTTTSNTITA) is disordered.

Belongs to the protein kinase superfamily. Ser/Thr protein kinase family.

It carries out the reaction L-seryl-[protein] + ATP = O-phospho-L-seryl-[protein] + ADP + H(+). The catalysed reaction is L-threonyl-[protein] + ATP = O-phospho-L-threonyl-[protein] + ADP + H(+). The sequence is that of Probable serine/threonine-protein kinase DDB_G0282777 from Dictyostelium discoideum (Social amoeba).